The following is a 291-amino-acid chain: Putative ribosomal protein uL16-like, mitochondrial (291 aa).

The transit peptide at 1-27 (MQRFMFSRVVEHQRQISRGFLSLVPSL) directs the protein to the mitochondrion. Basic and acidic residues predominate over residues 127–137 (VHETSNNEKKQ). The tract at residues 127–173 (VHETSNNEKKQQKQKSSVNEKKPKKKKKSSISDIPRRTKFQKHHRGR) is disordered. Residues 163–173 (RTKFQKHHRGR) are compositionally biased toward basic residues.

Belongs to the universal ribosomal protein uL16 family.

It localises to the mitochondrion. In terms of biological role, could be a component of the large subunit of mitochondrial ribosome. The polypeptide is Putative ribosomal protein uL16-like, mitochondrial (Arabidopsis thaliana (Mouse-ear cress)).